Here is a 92-residue protein sequence, read N- to C-terminus: Long neurotoxin 2 (92 aa).

The N-terminal stretch at Met1–Thr21 is a signal peptide. 5 disulfide bridges follow: Cys24/Cys42, Cys35/Cys63, Cys48/Cys52, Cys67/Cys79, and Cys80/Cys85.

This sequence belongs to the three-finger toxin family. Long-chain subfamily. Type II alpha-neurotoxin sub-subfamily. In terms of tissue distribution, expressed by the venom gland.

The protein resides in the secreted. In terms of biological role, binds with high affinity to muscular (alpha-1/CHRNA1) and neuronal (alpha-7/CHRNA7) nicotinic acetylcholine receptor (nAChR) and inhibits acetylcholine from binding to the receptor, thereby impairing neuromuscular and neuronal transmission. The sequence is that of Long neurotoxin 2 from Oxyuranus microlepidotus (Inland taipan).